The following is a 182-amino-acid chain: Ribosome maturation factor RimM (182 aa).

Positions 102–182 (EEGDYYWKDL…SIEVDWDPGF (81 aa)) constitute a PRC barrel domain.

Belongs to the RimM family. In terms of assembly, binds ribosomal protein uS19.

The protein resides in the cytoplasm. Functionally, an accessory protein needed during the final step in the assembly of 30S ribosomal subunit, possibly for assembly of the head region. Essential for efficient processing of 16S rRNA. May be needed both before and after RbfA during the maturation of 16S rRNA. It has affinity for free ribosomal 30S subunits but not for 70S ribosomes. The chain is Ribosome maturation factor RimM from Escherichia fergusonii (strain ATCC 35469 / DSM 13698 / CCUG 18766 / IAM 14443 / JCM 21226 / LMG 7866 / NBRC 102419 / NCTC 12128 / CDC 0568-73).